Reading from the N-terminus, the 42-residue chain is Potassium channel toxin gamma-KTx 1.6 (42 aa).

Cystine bridges form between Cys-5–Cys-23, Cys-11–Cys-34, Cys-20–Cys-39, and Cys-24–Cys-41.

Belongs to the ergtoxin family. Gamma-KTx 1 subfamily. As to expression, expressed by the venom gland.

It localises to the secreted. In terms of biological role, blocks Kv11/ERG potassium channels. This Centruroides exilicauda (Bark scorpion) protein is Potassium channel toxin gamma-KTx 1.6.